The chain runs to 105 residues: POU domain, class 3, transcription factor 3 (105 aa).

The 49-residue stretch at 1–49 folds into the POU-specific domain; sequence QADVGLALGTLYGNVFSQTTICRFEALQLSFKNMCKLKPLLNKWLEEAD. The segment at residues 67 to 105 is a DNA-binding region (homeobox); it reads KRKKRTSIEVSVKGALESHFLKCPKPAAQEITTLADSLQ.

It belongs to the POU transcription factor family. Class-3 subfamily.

The protein localises to the nucleus. The sequence is that of POU domain, class 3, transcription factor 3 (pou3f3) from Xenopus laevis (African clawed frog).